The sequence spans 433 residues: Tol-Pal system protein TolB (433 aa).

The N-terminal stretch at 1 to 21 (MIKRLRGLLVMLCCVAGMAVA) is a signal peptide.

This sequence belongs to the TolB family. In terms of assembly, the Tol-Pal system is composed of five core proteins: the inner membrane proteins TolA, TolQ and TolR, the periplasmic protein TolB and the outer membrane protein Pal. They form a network linking the inner and outer membranes and the peptidoglycan layer.

The protein localises to the periplasm. Its function is as follows. Part of the Tol-Pal system, which plays a role in outer membrane invagination during cell division and is important for maintaining outer membrane integrity. This Pseudomonas putida (strain ATCC 47054 / DSM 6125 / CFBP 8728 / NCIMB 11950 / KT2440) protein is Tol-Pal system protein TolB.